Consider the following 246-residue polypeptide: DNA polymerase sliding clamp (246 aa).

This sequence belongs to the PCNA family. As to quaternary structure, homotrimer. The subunits circularize to form a toroid; DNA passes through its center. Replication factor C (RFC) is required to load the toroid on the DNA.

Functionally, sliding clamp subunit that acts as a moving platform for DNA processing. Responsible for tethering the catalytic subunit of DNA polymerase and other proteins to DNA during high-speed replication. This is DNA polymerase sliding clamp from Thermoplasma volcanium (strain ATCC 51530 / DSM 4299 / JCM 9571 / NBRC 15438 / GSS1).